Reading from the N-terminus, the 205-residue chain is Large ribosomal subunit protein uL4 (205 aa).

The segment at 48-79 (KAQKSRSDVSGGGKKPWKQKGSGHARAGTTRS) is disordered.

Belongs to the universal ribosomal protein uL4 family. As to quaternary structure, part of the 50S ribosomal subunit.

Its function is as follows. One of the primary rRNA binding proteins, this protein initially binds near the 5'-end of the 23S rRNA. It is important during the early stages of 50S assembly. It makes multiple contacts with different domains of the 23S rRNA in the assembled 50S subunit and ribosome. Forms part of the polypeptide exit tunnel. The sequence is that of Large ribosomal subunit protein uL4 from Methylococcus capsulatus (strain ATCC 33009 / NCIMB 11132 / Bath).